The chain runs to 284 residues: Efem/EfeO family lipoprotein (284 aa).

Residues 1-17 (MKKLTTLLLASTLLIAA) form the signal peptide. Cys-18 carries the N-palmitoyl cysteine lipid modification. A lipid anchor (S-diacylglycerol cysteine) is attached at Cys-18.

This sequence belongs to the EfeM/EfeO family.

Its subcellular location is the cell membrane. The polypeptide is Efem/EfeO family lipoprotein (Staphylococcus aureus (strain MRSA252)).